We begin with the raw amino-acid sequence, 117 residues long: UPF0102 protein Swoo_0351 (117 aa).

Belongs to the UPF0102 family.

This is UPF0102 protein Swoo_0351 from Shewanella woodyi (strain ATCC 51908 / MS32).